The chain runs to 210 residues: Histone H1A (210 aa).

Disordered stretches follow at residues 1–49 and 101–210; these read MAEA…VSEQ and KGSG…PKKK. Composition is skewed to low complexity over residues 26–45 and 129–142; these read KKAAAARGAAKSKKPSSGPS and PLAAEAKKPAAAAK. The H15 domain maps to 42–113; that stretch reads SGPSVSEQIV…GASGSFKLNK (72 aa). Basic residues-rich tracts occupy residues 143-153 and 160-180; these read KTAKSPKKPKK and SPKKLKKPAKAAKSPAKKTAV. Low complexity predominate over residues 181 to 192; that stretch reads KPKVAAKSPAKA. Basic residues predominate over residues 193–210; it reads KAAKPKVAKAKKAAPKKK.

It belongs to the histone H1/H5 family.

It localises to the nucleus. The protein resides in the chromosome. Histones H1 are necessary for the condensation of nucleosome chains into higher-order structures. The protein is Histone H1A of Xenopus laevis (African clawed frog).